Here is a 365-residue protein sequence, read N- to C-terminus: Eukaryotic translation initiation factor 3 subunit H (365 aa).

Positions 11-160 (VKVEALVVMK…LRAFRLSPKF (150 aa)) constitute an MPN domain.

The protein belongs to the eIF-3 subunit H family. In terms of assembly, component of the eukaryotic translation initiation factor 3 (eIF-3) complex.

The protein localises to the cytoplasm. In terms of biological role, component of the eukaryotic translation initiation factor 3 (eIF-3) complex, which is involved in protein synthesis of a specialized repertoire of mRNAs and, together with other initiation factors, stimulates binding of mRNA and methionyl-tRNAi to the 40S ribosome. The eIF-3 complex specifically targets and initiates translation of a subset of mRNAs involved in cell proliferation. In Aspergillus clavatus (strain ATCC 1007 / CBS 513.65 / DSM 816 / NCTC 3887 / NRRL 1 / QM 1276 / 107), this protein is Eukaryotic translation initiation factor 3 subunit H.